A 548-amino-acid polypeptide reads, in one-letter code: Probable malate:quinone oxidoreductase (548 aa).

The interval 522 to 548 (KPQAADSTPKPQLKPKPVQKEVADIAL) is disordered. The span at 539–548 (VQKEVADIAL) shows a compositional bias: basic and acidic residues.

Belongs to the MQO family. FAD is required as a cofactor.

It carries out the reaction (S)-malate + a quinone = a quinol + oxaloacetate. It participates in carbohydrate metabolism; tricarboxylic acid cycle; oxaloacetate from (S)-malate (quinone route): step 1/1. This Escherichia coli O9:H4 (strain HS) protein is Probable malate:quinone oxidoreductase.